The chain runs to 148 residues: UPF0756 membrane protein YeaL (148 aa).

4 helical membrane-spanning segments follow: residues Ala14–Val34, Leu51–Leu71, Leu86–Met106, and Val121–Val141.

This sequence belongs to the UPF0756 family.

Its subcellular location is the cell membrane. This Shigella flexneri protein is UPF0756 membrane protein YeaL.